The chain runs to 231 residues: Orotidine 5'-phosphate decarboxylase (231 aa).

Residues Asp11, Lys34, 61-70 (DLKLHDIPNT), Thr117, Arg179, Gln188, Gly208, and Arg209 contribute to the substrate site. The active-site Proton donor is the Lys63.

The protein belongs to the OMP decarboxylase family. Type 1 subfamily. In terms of assembly, homodimer.

It catalyses the reaction orotidine 5'-phosphate + H(+) = UMP + CO2. It functions in the pathway pyrimidine metabolism; UMP biosynthesis via de novo pathway; UMP from orotate: step 2/2. Its function is as follows. Catalyzes the decarboxylation of orotidine 5'-monophosphate (OMP) to uridine 5'-monophosphate (UMP). In Streptococcus thermophilus (strain CNRZ 1066), this protein is Orotidine 5'-phosphate decarboxylase.